Consider the following 367-residue polypeptide: D-alanine--D-alanine ligase (367 aa).

The 202-residue stretch at 139–340 folds into the ATP-grasp domain; that stretch reads KLILKEKNIP…FSQVIDNMIS (202 aa). 169 to 224 lines the ATP pocket; the sequence is KEVLEYPMIVKPARLGSSIGVKKVNDKCELEEAIETAFSFDDKVIVEKWIDSRELN. 3 residues coordinate Mg(2+): Asp-298, Glu-311, and Asn-313.

Belongs to the D-alanine--D-alanine ligase family. Mg(2+) is required as a cofactor. Mn(2+) serves as cofactor.

The protein resides in the cytoplasm. It catalyses the reaction 2 D-alanine + ATP = D-alanyl-D-alanine + ADP + phosphate + H(+). It participates in cell wall biogenesis; peptidoglycan biosynthesis. In terms of biological role, cell wall formation. The protein is D-alanine--D-alanine ligase of Thermosipho africanus (strain TCF52B).